The primary structure comprises 154 residues: Cysteine-rich DPF motif domain-containing protein 1 (154 aa).

The protein belongs to the CDPF1 family.

The sequence is that of Cysteine-rich DPF motif domain-containing protein 1 from Drosophila melanogaster (Fruit fly).